A 1162-amino-acid chain; its full sequence is Leptin receptor (1162 aa).

An N-terminal signal peptide occupies residues 1-21; it reads MTCQKFYVVLLHWEFLYVITA. Residues 22–839 are Extracellular-facing; the sequence is LNLAYPTSPW…DIAKQQNDAG (818 aa). Intrachain disulfides connect cysteine 37–cysteine 90, cysteine 89–cysteine 99, cysteine 131–cysteine 142, cysteine 186–cysteine 195, and cysteine 188–cysteine 193. N-linked (GlcNAc...) asparagine glycosylation is found at asparagine 55, asparagine 56, asparagine 73, and asparagine 98. Asparagine 187 carries N-linked (GlcNAc...) asparagine glycosylation. One can recognise a Fibronectin type-III 1 domain in the interval 238 to 331; that stretch reads PPLGLRMEVT…LPQLFTTQDV (94 aa). N-linked (GlcNAc...) asparagine glycosylation is found at asparagine 275, asparagine 345, and asparagine 356. 2 disulfide bridges follow: cysteine 350–cysteine 410 and cysteine 411–cysteine 416. Asparagine 431 carries an N-linked (GlcNAc...) asparagine glycan. Cystine bridges form between cysteine 434/cysteine 445, cysteine 471/cysteine 526, and cysteine 486/cysteine 496. The interval 465 to 482 is leptin-binding; that stretch reads HRRSLYCPDNPSIRPTSE. N-linked (GlcNAc...) asparagine glycosylation is found at asparagine 514, asparagine 622, asparagine 657, asparagine 668, asparagine 686, asparagine 695, asparagine 698, and asparagine 726. 3 Fibronectin type-III domains span residues 537 to 632, 637 to 729, and 738 to 831; these read PPSN…TLVM, PMRG…NLTF, and AVQS…KDDI. Positions 620 to 624 match the WSXWS motif motif; that stretch reads WSNWS. A helical transmembrane segment spans residues 840–860; sequence LYVIVPIIISSCVLLLGTLLI. Over 861 to 1162 the chain is Cytoplasmic; that stretch reads SHQRMKKLFW…IENKMCDLTV (302 aa). The Box 1 motif signature appears at 869-877; that stretch reads FWDDVPNPK. Phosphoserine is present on serine 880. Positions 891–896 are required for JAK2 activation; sequence ETFEHL. The required for STAT3 phosphorylation stretch occupies residues 896–904; it reads LFTKHAESV. At tyrosine 985 the chain carries Phosphotyrosine; by JAK2. Position 1077 is a phosphotyrosine (tyrosine 1077). Tyrosine 1138 carries the phosphotyrosine; by JAK2 modification.

The protein belongs to the type I cytokine receptor family. Type 2 subfamily. As to quaternary structure, present as a mixture of monomers and dimers. The phosphorylated receptor binds a number of SH2 domain-containing proteins such as JAK2, STAT3, PTPN11, and SOCS3. Interaction with SOCS3 inhibits JAK/STAT signaling and MAPK cascade. Post-translationally, on ligand binding, phosphorylated on two conserved C-terminal tyrosine residues (isoform B only) by JAK2. Tyr-985 is required for complete binding and activation of PTPN11, ERK/FOS activation,for interaction with SOCS3 and SOCS3 mediated inhibition of leptin signaling. Phosphorylation on Tyr-1138 is required for STAT3 binding/activation. Phosphorylation of Tyr-1077 has a more accessory role. Isoform B is expressed in kidney, liver, lung, ovary, spleen and uterus. Increased level in uterus during gestation. Isoform A and isoform C are predominantly expressed in cerebral microvessels and choroid plexus, with lower levels in cortex, cerebellum and hypothalamus but also liver and lung. Isoform F is expressed at high levels in brain, liver and spleen and less in stomach, kidney, thymus, heart, lung and hypothalamus.

Its subcellular location is the cell membrane. It localises to the basolateral cell membrane. The protein localises to the secreted. Its function is as follows. Receptor for hormone LEP/leptin. On ligand binding, mediates LEP central and peripheral effects through the activation of different signaling pathways such as JAK2/STAT3 and MAPK cascade/FOS. In the hypothalamus, LEP acts as an appetite-regulating factor that induces a decrease in food intake and an increase in energy consumption by inducing anorexinogenic factors and suppressing orexigenic neuropeptides, also regulates bone mass and secretion of hypothalamo-pituitary-adrenal hormones. In the periphery, increases basal metabolism, influences reproductive function, regulates pancreatic beta-cell function and insulin secretion, is pro-angiogenic and affects innate and adaptive immunity. Control of energy homeostasis and melanocortin production (stimulation of POMC and full repression of AgRP transcription) is mediated by STAT3 signaling, whereas distinct signals regulate NPY and the control of fertility, growth and glucose homeostasis. Involved in the regulation of counter-regulatory response to hypoglycemia by inhibiting neurons of the parabrachial nucleus. Has a specific effect on T lymphocyte responses, differentially regulating the proliferation of naive and memory T-cells. Leptin increases Th1 and suppresses Th2 cytokine production. In terms of biological role, may transport LEP across the blood-brain barrier. Binds LEP and mediates LEP endocytosis. Does not induce phosphorylation of and activate STAT3. Antagonizes Isoform A and isoform B-mediated LEP binding and endocytosis. The chain is Leptin receptor (Lepr) from Rattus norvegicus (Rat).